A 339-amino-acid chain; its full sequence is Ribosomal RNA small subunit methyltransferase H (339 aa).

Residues 44 to 46, D61, F88, D105, and Q112 each bind S-adenosyl-L-methionine; that span reads GGY. The disordered stretch occupies residues 263-312; it reads PQAQSRHLPEKAAAQPVFEKPMKPVSPGEAETAENPRARSAHLRAARRTA. A compositionally biased stretch (basic residues) spans 301-312; it reads RSAHLRAARRTA.

The protein belongs to the methyltransferase superfamily. RsmH family.

The protein resides in the cytoplasm. The enzyme catalyses cytidine(1402) in 16S rRNA + S-adenosyl-L-methionine = N(4)-methylcytidine(1402) in 16S rRNA + S-adenosyl-L-homocysteine + H(+). In terms of biological role, specifically methylates the N4 position of cytidine in position 1402 (C1402) of 16S rRNA. The protein is Ribosomal RNA small subunit methyltransferase H of Chelativorans sp. (strain BNC1).